A 247-amino-acid polypeptide reads, in one-letter code: MSKLFWAMLAFISRLPVPSRWSQGLDFEQYSRGIVMFPFIGLILGGVSGLIFILLQPWCGIPLAALFCILALALLTGGFHLDGLADTCDGIFSARRRERMLEIMRDSRLGTHGGLALIFVLLAKILVVSELALRGTPMLAALAAACAAGRGSAVLLMYRHRYAREEGLGNVFIGKVSGRQTCITLGLAVIVATVLLPGMQGLAAMVVTCAAIFILGQLLKRTLGGQTGDTLGAAIELGELIFLLALL.

A run of 5 helical transmembrane segments spans residues 34–54, 59–79, 113–133, 138–158, and 187–207; these read IVMF…IFIL, CGIP…TGGF, GGLA…ELAL, MLAA…LLMY, and LAVI…AMVV.

It belongs to the CobS family. Mg(2+) serves as cofactor.

The protein localises to the cell inner membrane. It carries out the reaction alpha-ribazole + adenosylcob(III)inamide-GDP = adenosylcob(III)alamin + GMP + H(+). The catalysed reaction is alpha-ribazole 5'-phosphate + adenosylcob(III)inamide-GDP = adenosylcob(III)alamin 5'-phosphate + GMP + H(+). It functions in the pathway cofactor biosynthesis; adenosylcobalamin biosynthesis; adenosylcobalamin from cob(II)yrinate a,c-diamide: step 7/7. Functionally, joins adenosylcobinamide-GDP and alpha-ribazole to generate adenosylcobalamin (Ado-cobalamin). Also synthesizes adenosylcobalamin 5'-phosphate from adenosylcobinamide-GDP and alpha-ribazole 5'-phosphate. This chain is Adenosylcobinamide-GDP ribazoletransferase, found in Salmonella dublin (strain CT_02021853).